The following is a 257-amino-acid chain: Probable enoyl-CoA hydratase (257 aa).

Belongs to the enoyl-CoA hydratase/isomerase family.

It carries out the reaction a (3S)-3-hydroxyacyl-CoA = a (2E)-enoyl-CoA + H2O. The enzyme catalyses a 4-saturated-(3S)-3-hydroxyacyl-CoA = a (3E)-enoyl-CoA + H2O. Its function is as follows. Could possibly oxidize fatty acids using specific components. The chain is Probable enoyl-CoA hydratase (fadB1) from Rhizobium meliloti (strain 1021) (Ensifer meliloti).